The sequence spans 344 residues: N-acetyl-gamma-glutamyl-phosphate reductase (344 aa).

Cysteine 148 is a catalytic residue.

It belongs to the NAGSA dehydrogenase family. Type 1 subfamily.

The protein localises to the cytoplasm. The enzyme catalyses N-acetyl-L-glutamate 5-semialdehyde + phosphate + NADP(+) = N-acetyl-L-glutamyl 5-phosphate + NADPH + H(+). It participates in amino-acid biosynthesis; L-arginine biosynthesis; N(2)-acetyl-L-ornithine from L-glutamate: step 3/4. Catalyzes the NADPH-dependent reduction of N-acetyl-5-glutamyl phosphate to yield N-acetyl-L-glutamate 5-semialdehyde. The sequence is that of N-acetyl-gamma-glutamyl-phosphate reductase from Clostridium kluyveri (strain NBRC 12016).